A 286-amino-acid chain; its full sequence is tRNA (guanine-N(7)-)-methyltransferase (286 aa).

Residues E91, E116, N143, and D165 each coordinate S-adenosyl-L-methionine. D165 is a catalytic residue. Substrate-binding positions include K169, D201, and 262–265; that span reads TNFE.

This sequence belongs to the class I-like SAM-binding methyltransferase superfamily. TrmB family.

The enzyme catalyses guanosine(46) in tRNA + S-adenosyl-L-methionine = N(7)-methylguanosine(46) in tRNA + S-adenosyl-L-homocysteine. The protein operates within tRNA modification; N(7)-methylguanine-tRNA biosynthesis. Catalyzes the formation of N(7)-methylguanine at position 46 (m7G46) in tRNA. The protein is tRNA (guanine-N(7)-)-methyltransferase of Bifidobacterium longum subsp. infantis (strain ATCC 15697 / DSM 20088 / JCM 1222 / NCTC 11817 / S12).